The sequence spans 222 residues: Ras-related protein RABA4d (222 aa).

22–29 contacts GTP; it reads GDSAVGKT. Residues 44 to 52 carry the Effector region motif; sequence SKATIGVEF. Residues 70–74, 128–131, and 158–159 each bind GTP; these read DTAGQ, NKCD, and SA. S-geranylgeranyl cysteine attachment occurs at residues Cys218 and Cys219.

Belongs to the small GTPase superfamily. Rab family. Interacts with PI4KB1. Specifically expressed in pollen and localized to the tips of growing pollen tubes.

It is found in the cytoplasmic vesicle membrane. Functionally, intracellular vesicle trafficking and protein transport. Plays an important role in the regulation of pollen tube tip growth. The chain is Ras-related protein RABA4d (RABA4D) from Arabidopsis thaliana (Mouse-ear cress).